The sequence spans 496 residues: Polyphosphate:AMP phosphotransferase (496 aa).

PPK2 regions lie at residues 11 to 234 (IDKD…LQAA) and 269 to 495 (LDKD…YKKD).

Belongs to the polyphosphate kinase 2 (PPK2) family. Class II subfamily. Homodimer. The cofactor is Mg(2+).

It carries out the reaction [phosphate](n) + ADP = [phosphate](n+1) + AMP. Uses inorganic polyphosphate (polyP) as a donor to convert AMP to ADP. Can also convert GMP to GDP, with lower efficiency. Cannot dephosphorylate ADP in the presence of polyP. The chain is Polyphosphate:AMP phosphotransferase from Pseudomonas aeruginosa (strain ATCC 15692 / DSM 22644 / CIP 104116 / JCM 14847 / LMG 12228 / 1C / PRS 101 / PAO1).